We begin with the raw amino-acid sequence, 156 residues long: Small ribosomal subunit protein uS7 (156 aa).

It belongs to the universal ribosomal protein uS7 family. In terms of assembly, part of the 30S ribosomal subunit. Contacts proteins S9 and S11.

In terms of biological role, one of the primary rRNA binding proteins, it binds directly to 16S rRNA where it nucleates assembly of the head domain of the 30S subunit. Is located at the subunit interface close to the decoding center, probably blocks exit of the E-site tRNA. The chain is Small ribosomal subunit protein uS7 from Clostridium kluyveri (strain NBRC 12016).